We begin with the raw amino-acid sequence, 94 residues long: Pyrimidine/purine nucleoside phosphorylase (94 aa).

The protein belongs to the nucleoside phosphorylase PpnP family.

It carries out the reaction a purine D-ribonucleoside + phosphate = a purine nucleobase + alpha-D-ribose 1-phosphate. The enzyme catalyses adenosine + phosphate = alpha-D-ribose 1-phosphate + adenine. It catalyses the reaction cytidine + phosphate = cytosine + alpha-D-ribose 1-phosphate. The catalysed reaction is guanosine + phosphate = alpha-D-ribose 1-phosphate + guanine. It carries out the reaction inosine + phosphate = alpha-D-ribose 1-phosphate + hypoxanthine. The enzyme catalyses thymidine + phosphate = 2-deoxy-alpha-D-ribose 1-phosphate + thymine. It catalyses the reaction uridine + phosphate = alpha-D-ribose 1-phosphate + uracil. The catalysed reaction is xanthosine + phosphate = alpha-D-ribose 1-phosphate + xanthine. Functionally, catalyzes the phosphorolysis of diverse nucleosides, yielding D-ribose 1-phosphate and the respective free bases. Can use uridine, adenosine, guanosine, cytidine, thymidine, inosine and xanthosine as substrates. Also catalyzes the reverse reactions. In Shigella dysenteriae serotype 1 (strain Sd197), this protein is Pyrimidine/purine nucleoside phosphorylase.